Here is a 182-residue protein sequence, read N- to C-terminus: uncharacterized protein (182 aa).

In terms of domain architecture, N-acetyltransferase spans 55–182 (VNLHDLEKLC…GVKGMFWYPL (128 aa)).

The protein belongs to the acetyltransferase family. Ycf52 subfamily.

It is found in the plastid. Its subcellular location is the chloroplast. This is an uncharacterized protein from Gracilaria tenuistipitata var. liui (Red alga).